The sequence spans 368 residues: Glycoprotein UL18 (368 aa).

A signal peptide spans Met1–Val18. The interval Gly19 to Ser114 is alpha-1-like. 13 N-linked (GlcNAc...) asparagine; by host glycosylation sites follow: Asn56, Asn66, Asn74, Asn95, Asn123, Asn127, Asn150, Asn167, Asn177, Asn193, Asn240, Asn282, and Asn291. The tract at residues Val115–Val208 is alpha-2-like. The segment at Thr209 to Pro303 is alpha-3-like. A helical transmembrane segment spans residues Tyr321–Phe342.

Interacts with host LILRB1.

Its subcellular location is the host membrane. Its function is as follows. Plays a role in the protection against host NK cell cytotoxicity by interacting with and modulating the activity of the host inhibitory leukocyte Ig-like receptor 1/LILRB1, which is expressed on monocytes, dendritic cells, as well as subsets of T and NK cells. UL18 exerts an inhibitory effect on LIR-1+ NK cells, while it stimulates LIR-1- NK cell. These modulations prevent lysis of the infected cells by NK cells. In Homo sapiens (Human), this protein is Glycoprotein UL18 (H301).